We begin with the raw amino-acid sequence, 429 residues long: UDP-N-acetylglucosamine 1-carboxyvinyltransferase (429 aa).

Position 22-23 (22-23 (KN)) interacts with phosphoenolpyruvate. UDP-N-acetyl-alpha-D-glucosamine is bound at residue Arg-102. Cys-126 (proton donor) is an active-site residue. Cys-126 bears the 2-(S-cysteinyl)pyruvic acid O-phosphothioketal mark. UDP-N-acetyl-alpha-D-glucosamine-binding positions include 131–135 (RPVDL), Asp-316, and Ile-338.

The protein belongs to the EPSP synthase family. MurA subfamily.

Its subcellular location is the cytoplasm. The catalysed reaction is phosphoenolpyruvate + UDP-N-acetyl-alpha-D-glucosamine = UDP-N-acetyl-3-O-(1-carboxyvinyl)-alpha-D-glucosamine + phosphate. It participates in cell wall biogenesis; peptidoglycan biosynthesis. Functionally, cell wall formation. Adds enolpyruvyl to UDP-N-acetylglucosamine. This Afipia carboxidovorans (strain ATCC 49405 / DSM 1227 / KCTC 32145 / OM5) (Oligotropha carboxidovorans) protein is UDP-N-acetylglucosamine 1-carboxyvinyltransferase.